We begin with the raw amino-acid sequence, 383 residues long: 8-amino-7-oxononanoate synthase (383 aa).

Position 21 (arginine 21) interacts with substrate. 108–109 (GY) contributes to the pyridoxal 5'-phosphate binding site. Substrate is bound at residue histidine 133. The pyridoxal 5'-phosphate site is built by serine 179, histidine 207, and threonine 233. Lysine 236 is subject to N6-(pyridoxal phosphate)lysine. A substrate-binding site is contributed by threonine 350.

It belongs to the class-II pyridoxal-phosphate-dependent aminotransferase family. BioF subfamily. Homodimer. The cofactor is pyridoxal 5'-phosphate.

It catalyses the reaction 6-carboxyhexanoyl-[ACP] + L-alanine + H(+) = (8S)-8-amino-7-oxononanoate + holo-[ACP] + CO2. The protein operates within cofactor biosynthesis; biotin biosynthesis. Catalyzes the decarboxylative condensation of pimeloyl-[acyl-carrier protein] and L-alanine to produce 8-amino-7-oxononanoate (AON), [acyl-carrier protein], and carbon dioxide. This chain is 8-amino-7-oxononanoate synthase, found in Yersinia pseudotuberculosis serotype IB (strain PB1/+).